The chain runs to 152 residues: Large ribosomal subunit protein bL9 (152 aa).

It belongs to the bacterial ribosomal protein bL9 family.

Functionally, binds to the 23S rRNA. This chain is Large ribosomal subunit protein bL9, found in Synechococcus sp. (strain CC9311).